We begin with the raw amino-acid sequence, 227 residues long: Cytochrome c oxidase subunit 2 (227 aa).

At 1-14 (MAYPFQLGLQDATS) the chain is on the mitochondrial intermembrane side. The helical transmembrane segment at 15 to 45 (PIMEELLHFHDHTLMIVFLISSLVLYIISLM) threads the bilayer. Residues 46 to 59 (LTTKLTHTSTMDAQ) are Mitochondrial matrix-facing. A helical transmembrane segment spans residues 60-87 (EVETVWTILPAIILILIALPSLRILYMM). Topologically, residues 88–227 (DEINNPSLTV…YFETWSALMV (140 aa)) are mitochondrial intermembrane. Cu cation-binding residues include histidine 161, cysteine 196, glutamate 198, cysteine 200, histidine 204, and methionine 207. Glutamate 198 lines the Mg(2+) pocket. The residue at position 218 (tyrosine 218) is a Phosphotyrosine.

Belongs to the cytochrome c oxidase subunit 2 family. Component of the cytochrome c oxidase (complex IV, CIV), a multisubunit enzyme composed of 14 subunits. The complex is composed of a catalytic core of 3 subunits MT-CO1, MT-CO2 and MT-CO3, encoded in the mitochondrial DNA, and 11 supernumerary subunits COX4I, COX5A, COX5B, COX6A, COX6B, COX6C, COX7A, COX7B, COX7C, COX8 and NDUFA4, which are encoded in the nuclear genome. The complex exists as a monomer or a dimer and forms supercomplexes (SCs) in the inner mitochondrial membrane with NADH-ubiquinone oxidoreductase (complex I, CI) and ubiquinol-cytochrome c oxidoreductase (cytochrome b-c1 complex, complex III, CIII), resulting in different assemblies (supercomplex SCI(1)III(2)IV(1) and megacomplex MCI(2)III(2)IV(2)). Found in a complex with TMEM177, COA6, COX18, COX20, SCO1 and SCO2. Interacts with TMEM177 in a COX20-dependent manner. Interacts with COX20. Interacts with COX16. It depends on Cu cation as a cofactor.

It localises to the mitochondrion inner membrane. It catalyses the reaction 4 Fe(II)-[cytochrome c] + O2 + 8 H(+)(in) = 4 Fe(III)-[cytochrome c] + 2 H2O + 4 H(+)(out). Functionally, component of the cytochrome c oxidase, the last enzyme in the mitochondrial electron transport chain which drives oxidative phosphorylation. The respiratory chain contains 3 multisubunit complexes succinate dehydrogenase (complex II, CII), ubiquinol-cytochrome c oxidoreductase (cytochrome b-c1 complex, complex III, CIII) and cytochrome c oxidase (complex IV, CIV), that cooperate to transfer electrons derived from NADH and succinate to molecular oxygen, creating an electrochemical gradient over the inner membrane that drives transmembrane transport and the ATP synthase. Cytochrome c oxidase is the component of the respiratory chain that catalyzes the reduction of oxygen to water. Electrons originating from reduced cytochrome c in the intermembrane space (IMS) are transferred via the dinuclear copper A center (CU(A)) of subunit 2 and heme A of subunit 1 to the active site in subunit 1, a binuclear center (BNC) formed by heme A3 and copper B (CU(B)). The BNC reduces molecular oxygen to 2 water molecules using 4 electrons from cytochrome c in the IMS and 4 protons from the mitochondrial matrix. This is Cytochrome c oxidase subunit 2 (MT-CO2) from Canis lupus familiaris (Dog).